Here is a 249-residue protein sequence, read N- to C-terminus: Type III pantothenate kinase (249 aa).

6 to 13 (DCGNSLIK) is an ATP binding site. Substrate-binding positions include Tyr93 and 100–103 (GLDR). The active-site Proton acceptor is Asp102. Asp122 is a binding site for K(+). Residue Thr125 coordinates ATP. Thr181 is a substrate binding site.

This sequence belongs to the type III pantothenate kinase family. Homodimer. The cofactor is NH4(+). K(+) serves as cofactor.

Its subcellular location is the cytoplasm. It carries out the reaction (R)-pantothenate + ATP = (R)-4'-phosphopantothenate + ADP + H(+). Its pathway is cofactor biosynthesis; coenzyme A biosynthesis; CoA from (R)-pantothenate: step 1/5. In terms of biological role, catalyzes the phosphorylation of pantothenate (Pan), the first step in CoA biosynthesis. The polypeptide is Type III pantothenate kinase (Pseudomonas paraeruginosa (strain DSM 24068 / PA7) (Pseudomonas aeruginosa (strain PA7))).